Here is a 93-residue protein sequence, read N- to C-terminus: UPF0337 protein Bd3330 (93 aa).

This sequence belongs to the UPF0337 (CsbD) family.

The protein is UPF0337 protein Bd3330 of Bdellovibrio bacteriovorus (strain ATCC 15356 / DSM 50701 / NCIMB 9529 / HD100).